We begin with the raw amino-acid sequence, 496 residues long: Genome polyprotein (496 aa).

Topologically, residues 1-447 are extracellular; it reads SRCTHLENRD…HTVLGGAFNS (447 aa). Cystine bridges form between C3/C30, C60/C116, C60/C121, C74/C105, C92/C116, and C92/C121. The tract at residues 98 to 111 is fusion peptide; that stretch reads DRGWGNHCGLFGKG. N-linked (GlcNAc...) asparagine; by host glycosylation is present at N154. 2 cysteine pairs are disulfide-bonded: C186–C290 and C307–C338. Residues 448–468 form a helical membrane-spanning segment; it reads IFGGVGFLPKLLMGVALAWLG. Topologically, residues 469-479 are cytoplasmic; sequence LNTRNPTMSMS. The helical transmembrane segment at 480-496 threads the bilayer; the sequence is FLLTGGLVLAMTLGVGA.

In terms of assembly, homodimer; in the endoplasmic reticulum and Golgi. In terms of processing, N-glycosylated.

Its subcellular location is the virion membrane. The protein resides in the host endoplasmic reticulum membrane. Its function is as follows. Binds to host cell surface receptor and mediates fusion between viral and cellular membranes. Envelope protein is synthesized in the endoplasmic reticulum in the form of heterodimer with protein prM. They play a role in virion budding in the ER, and the newly formed immature particle is covered with 60 spikes composed of heterodimer between precursor prM and envelope protein E. The virion is transported to the Golgi apparatus where the low pH causes dissociation of PrM-E heterodimers and formation of E homodimers. prM-E cleavage is ineficient, and many virions are only partially matured. These uncleaved prM would play a role in immune evasion. The protein is Genome polyprotein of Bos taurus (Bovine).